The chain runs to 232 residues: Ubiquinone biosynthesis O-methyltransferase (232 aa).

S-adenosyl-L-methionine contacts are provided by arginine 36, glycine 55, aspartate 76, and leucine 120.

Belongs to the methyltransferase superfamily. UbiG/COQ3 family.

The catalysed reaction is a 3-demethylubiquinol + S-adenosyl-L-methionine = a ubiquinol + S-adenosyl-L-homocysteine + H(+). The enzyme catalyses a 3-(all-trans-polyprenyl)benzene-1,2-diol + S-adenosyl-L-methionine = a 2-methoxy-6-(all-trans-polyprenyl)phenol + S-adenosyl-L-homocysteine + H(+). The protein operates within cofactor biosynthesis; ubiquinone biosynthesis. O-methyltransferase that catalyzes the 2 O-methylation steps in the ubiquinone biosynthetic pathway. The sequence is that of Ubiquinone biosynthesis O-methyltransferase from Pseudomonas syringae pv. tomato (strain ATCC BAA-871 / DC3000).